A 424-amino-acid chain; its full sequence is UPF0415 protein C7orf25 homolog (424 aa).

This sequence belongs to the UPF0415 family.

The chain is UPF0415 protein C7orf25 homolog from Xenopus laevis (African clawed frog).